The sequence spans 263 residues: Methylesterase 18 (263 aa).

Ser-80 acts as the Acyl-ester intermediate in catalysis. Catalysis depends on charge relay system residues Asp-212 and His-240.

Belongs to the AB hydrolase superfamily. Methylesterase family.

The catalysed reaction is methyl (indol-3-yl)acetate + H2O = (indol-3-yl)acetate + methanol + H(+). It participates in plant hormone biosynthesis. In terms of biological role, methylesterase shown to have methyl indole-3-acetic acid (MeIAA) esterase activity in vitro. The protein is Methylesterase 18 of Arabidopsis thaliana (Mouse-ear cress).